The primary structure comprises 222 residues: Deoxyribose-phosphate aldolase (222 aa).

Catalysis depends on aspartate 89, which acts as the Proton donor/acceptor. Lysine 152 acts as the Schiff-base intermediate with acetaldehyde in catalysis. The active-site Proton donor/acceptor is lysine 181.

It belongs to the DeoC/FbaB aldolase family. DeoC type 1 subfamily.

It is found in the cytoplasm. The enzyme catalyses 2-deoxy-D-ribose 5-phosphate = D-glyceraldehyde 3-phosphate + acetaldehyde. It functions in the pathway carbohydrate degradation; 2-deoxy-D-ribose 1-phosphate degradation; D-glyceraldehyde 3-phosphate and acetaldehyde from 2-deoxy-alpha-D-ribose 1-phosphate: step 2/2. In terms of biological role, catalyzes a reversible aldol reaction between acetaldehyde and D-glyceraldehyde 3-phosphate to generate 2-deoxy-D-ribose 5-phosphate. The polypeptide is Deoxyribose-phosphate aldolase (Clostridium novyi (strain NT)).